Consider the following 458-residue polypeptide: UDP-N-acetylmuramoylalanine--D-glutamate ligase (458 aa).

124–130 lines the ATP pocket; that stretch reads GSDGKTT.

It belongs to the MurCDEF family.

Its subcellular location is the cytoplasm. It catalyses the reaction UDP-N-acetyl-alpha-D-muramoyl-L-alanine + D-glutamate + ATP = UDP-N-acetyl-alpha-D-muramoyl-L-alanyl-D-glutamate + ADP + phosphate + H(+). It functions in the pathway cell wall biogenesis; peptidoglycan biosynthesis. Cell wall formation. Catalyzes the addition of glutamate to the nucleotide precursor UDP-N-acetylmuramoyl-L-alanine (UMA). This Clostridium botulinum (strain ATCC 19397 / Type A) protein is UDP-N-acetylmuramoylalanine--D-glutamate ligase.